Here is a 289-residue protein sequence, read N- to C-terminus: Bis(5'-nucleosyl)-tetraphosphatase, symmetrical (289 aa).

This sequence belongs to the Ap4A hydrolase family.

The catalysed reaction is P(1),P(4)-bis(5'-adenosyl) tetraphosphate + H2O = 2 ADP + 2 H(+). Functionally, hydrolyzes diadenosine 5',5'''-P1,P4-tetraphosphate to yield ADP. This chain is Bis(5'-nucleosyl)-tetraphosphatase, symmetrical, found in Pseudomonas fluorescens (strain ATCC BAA-477 / NRRL B-23932 / Pf-5).